A 320-amino-acid polypeptide reads, in one-letter code: rRNA methyltransferase 2, mitochondrial (320 aa).

A mitochondrion-targeting transit peptide spans 1 to 18; the sequence is MILVYNRIRSIISSSLGR. Residues 83–86, aspartate 104, 178–179, and aspartate 203 contribute to the S-adenosyl-L-methionine site; these read PGAW and DI. The active-site Proton acceptor is lysine 264.

The protein belongs to the class I-like SAM-binding methyltransferase superfamily. RNA methyltransferase RlmE family.

The protein localises to the mitochondrion. It carries out the reaction uridine(2791) in 21S rRNA + S-adenosyl-L-methionine = 2'-O-methyluridine(2791) in 21S rRNA + S-adenosyl-L-homocysteine + H(+). Functionally, S-adenosyl-L-methionine-dependent 2'-O-ribose methyltransferase that catalyzes the formation of 2'-O-methyluridine at position 2791 (Um2791) in the 21S mitochondrial large subunit ribosomal RNA (mtLSU rRNA), a universally conserved modification in the peptidyl transferase domain of the mtLSU rRNA. This chain is rRNA methyltransferase 2, mitochondrial, found in Saccharomyces cerevisiae (strain ATCC 204508 / S288c) (Baker's yeast).